Reading from the N-terminus, the 460-residue chain is Methylenetetrahydrofolate--tRNA-(uracil-5-)-methyltransferase TrmFO (460 aa).

15 to 20 (GAGLAG) is an FAD binding site.

The protein belongs to the MnmG family. TrmFO subfamily. It depends on FAD as a cofactor.

Its subcellular location is the cytoplasm. The enzyme catalyses uridine(54) in tRNA + (6R)-5,10-methylene-5,6,7,8-tetrahydrofolate + NADH + H(+) = 5-methyluridine(54) in tRNA + (6S)-5,6,7,8-tetrahydrofolate + NAD(+). It carries out the reaction uridine(54) in tRNA + (6R)-5,10-methylene-5,6,7,8-tetrahydrofolate + NADPH + H(+) = 5-methyluridine(54) in tRNA + (6S)-5,6,7,8-tetrahydrofolate + NADP(+). Catalyzes the folate-dependent formation of 5-methyl-uridine at position 54 (M-5-U54) in all tRNAs. The sequence is that of Methylenetetrahydrofolate--tRNA-(uracil-5-)-methyltransferase TrmFO from Synechococcus sp. (strain CC9902).